Consider the following 1137-residue polypeptide: Guanine nucleotide exchange factor DBS (1137 aa).

The CRAL-TRIO domain maps to 52–224 (TAMATDEIMH…DLGGTLDYCH (173 aa)). The Spectrin repeat unit spans residues 351–456 (LQLRHFEQGF…IARRRGLLSK (106 aa)). A phosphoserine mark is found at serine 457 and serine 480. A coiled-coil region spans residues 503 to 529 (LETGAENKIQELNAIYKEYESILNQDL). Positions 557–625 (LAARQTRPVQ…QGRGSAGEEE (69 aa)) are disordered. Residues 584 to 597 (GIRRGSENSSSEGG) are compositionally biased toward low complexity. A compositionally biased stretch (basic and acidic residues) spans 607–616 (AKSEMSESRQ). Phosphoserine is present on serine 620. The DH domain maps to 631–811 (LRRHVMSELL…LGILKAVNDS (181 aa)). The PH domain occupies 829-945 (KLLMQGSFSV…WVNEIRKVLT (117 aa)). Disordered stretches follow at residues 955–1058 (SQHR…LVPG) and 1116–1137 (GPSGSAQCLSSSGKAHVPRAHP). Over residues 962 to 977 (QSQSLPLPAPTSTSPS) the composition is skewed to low complexity. 4 positions are modified to phosphoserine: serine 1033, serine 1034, serine 1041, and serine 1042. In terms of domain architecture, SH3 spans 1055 to 1116 (LVPGKYTVVA…PASSLSVRLG (62 aa)). Over residues 1119–1128 (GSAQCLSSSG) the composition is skewed to polar residues.

The protein belongs to the MCF2 family. Interacts with GTP-bound RAC1. Interacts with CDC42. Interacts with RHOA. Interacts with CCPG1, which results in specific inhibition of its exchange activity toward RHOA, but does not affect its activity on CDC42.

It localises to the cytoplasm. The protein localises to the cell membrane. Its subcellular location is the endomembrane system. Its function is as follows. Guanine nucleotide exchange factor that catalyzes guanine nucleotide exchange on RHOA and CDC42, and thereby contributes to the regulation of RHOA and CDC42 signaling pathways. Seems to lack activity with RAC1. Becomes activated and highly tumorigenic by truncation of the N-terminus. Isoform 5 activates CDC42. Functionally, does not catalyze guanine nucleotide exchange on CDC42. This chain is Guanine nucleotide exchange factor DBS (MCF2L), found in Homo sapiens (Human).